The chain runs to 267 residues: Large ribosomal subunit protein uL4 (267 aa).

The protein belongs to the universal ribosomal protein uL4 family. In terms of assembly, part of the 50S ribosomal subunit.

Functionally, one of the primary rRNA binding proteins, this protein initially binds near the 5'-end of the 23S rRNA. It is important during the early stages of 50S assembly. It makes multiple contacts with different domains of the 23S rRNA in the assembled 50S subunit and ribosome. Its function is as follows. Forms part of the polypeptide exit tunnel. The protein is Large ribosomal subunit protein uL4 of Saccharolobus islandicus (strain M.16.27) (Sulfolobus islandicus).